The primary structure comprises 416 residues: Ferrochelatase, mitochondrial (416 aa).

The N-terminal 47 residues, 1-47, are a transit peptide targeting the mitochondrion; sequence MAAALRSAGVLLRDRLLYGGSRACQPRRCQSGAATAAAATETAQRAR. The tract at residues 41–62 is disordered; that stretch reads ETAQRARSPKPQAQPGNRKPRT. Lys50 bears the N6-acetyllysine mark. Protoporphyrin IX-binding residues include Arg108, Tyr116, and Ser123. N6-succinyllysine is present on Lys131. Cys189 contacts [2Fe-2S] cluster. His223 is an active-site residue. Lys283 carries the N6-acetyllysine; alternate modification. N6-succinyllysine; alternate is present on Lys283. Asp376 is an active-site residue. [2Fe-2S] cluster-binding residues include Cys396, Cys399, and Cys404. Lys408 bears the N6-acetyllysine; alternate mark. Position 408 is an N6-succinyllysine; alternate (Lys408).

It belongs to the ferrochelatase family. Homodimer. Homotetramer. Interaction with PGRMC1; the interaction results in decreased FECH activity. Interacts with ABCB10 and SLC25A37; this interaction forms an oligomeric complex. Forms a complex with ABCB7 and ABCB10, where a dimeric FECH bridges ABCB7 and ABCB10 homodimers; this complex may be required for cellular iron homeostasis, mitochondrial function and heme biosynthesis. Interacts with ABCB7 and ABCB10. It depends on [2Fe-2S] cluster as a cofactor.

It is found in the mitochondrion inner membrane. It catalyses the reaction heme b + 2 H(+) = protoporphyrin IX + Fe(2+). It functions in the pathway porphyrin-containing compound metabolism; protoheme biosynthesis; protoheme from protoporphyrin-IX: step 1/1. Its function is as follows. Catalyzes the ferrous insertion into protoporphyrin IX and participates in the terminal step in the heme biosynthetic pathway. This is Ferrochelatase, mitochondrial from Bos taurus (Bovine).